Consider the following 161-residue polypeptide: Pathogenesis-related protein 1 (161 aa).

The N-terminal stretch at M1 to A26 is a signal peptide. One can recognise an SCP domain in the interval V34–Y149. 3 cysteine pairs are disulfide-bonded: C70/C138, C113/C117, and C133/C147.

Belongs to the CRISP family. As to expression, expressed in flowers, stems and roots but not in leaves.

Its function is as follows. Probably involved in the defense reaction of plants against pathogens. The sequence is that of Pathogenesis-related protein 1 from Arabidopsis thaliana (Mouse-ear cress).